The primary structure comprises 517 residues: Probable mannosyltransferase KTR7 (517 aa).

The Cytoplasmic segment spans residues 1 to 23 (MAIRLNPKVRRFLLDKCRQKRYG). The chain crosses the membrane as a helical; Signal-anchor for type II membrane protein span at residues 24–44 (FLFLGCIFAILYCMGTWPFFA). A stem region region spans residues 45–85 (KDIVHDPNNLPYSLQDYSTDKDEPFFRGCTDTKLYLQNPAY). Residues 45–517 (KDIVHDPNNL…IRRENFRVIE (473 aa)) lie on the Lumenal side of the membrane. Residues 86–517 (SKMNASFVML…IRRENFRVIE (432 aa)) are catalytic. 2 N-linked (GlcNAc...) asparagine glycosylation sites follow: Asn-89 and Asn-144. Glu-367 (nucleophile) is an active-site residue.

Belongs to the glycosyltransferase 15 family.

It localises to the membrane. Possible glycosyltransferase that transfers an alpha-D-mannosyl residue from GDP-mannose into lipid-linked oligosaccharide, forming an alpha-(1-&gt;2)-D-mannosyl-D-mannose linkage. In Saccharomyces cerevisiae (strain ATCC 204508 / S288c) (Baker's yeast), this protein is Probable mannosyltransferase KTR7 (KTR7).